Consider the following 2130-residue polypeptide: Highly reducing polyketide synthase anuA (2130 aa).

The Ketosynthase family 3 (KS3) domain occupies 1–213; the sequence is MKAGVLSGTS…GANCHVILEQ (213 aa). A Malonyl-CoA:ACP transacylase (MAT) domain is found at 317-644; it reads FVFTGQGSQW…SFAGNLWLKG (328 aa). An N-terminal hotdog fold region spans residues 701–836; sequence HELLGSLLTG…GSIAIHPRNA (136 aa). Positions 701–1000 constitute a PKS/mFAS DH domain; sequence HELLGSLLTG…LSPYQSTSQA (300 aa). His733 functions as the Proton acceptor; for dehydratase activity in the catalytic mechanism. Residues 849–1000 are C-terminal hotdog fold; the sequence is LESTAKRTWY…LSPYQSTSQA (152 aa). Catalysis depends on Asp914, which acts as the Proton donor; for dehydratase activity. Residues 1405 to 1722 form the Enoyl reductase (ER) domain; the sequence is GQLDTIYFQQ…SRSRIGKVAI (318 aa). Positions 1747 to 1927 constitute a Ketoreductase (KR) domain; sequence SYVMVGCLGG…AVAVGLGMIS (181 aa). Residues 2047–2125 form the Carrier domain; that stretch reads TLDEAVLDHI…SLRDLAMTSL (79 aa). The residue at position 2084 (Ser2084) is an O-(pantetheine 4'-phosphoryl)serine.

Pantetheine 4'-phosphate serves as cofactor.

It functions in the pathway secondary metabolite biosynthesis. Functionally, highly reducing polyketide synthase; part of the gene cluster that mediates the biosynthesis of annullatin D, an alkylated aromatic polyketide with a fused dihydrobenzofuran lactone ring system that exhibits potent agonistic activities toward the cannabinoid receptors. The annullatin backbone 2-hydroxymethyl-3-pentylphenol is assembled from one acetyl-CoA starter unit and 5 malonyl-CoA elongation units by cooperation of the highly reducing polyketide synthase anuA, the short-chain dehydrogenase anuB and the oxidoreductase anuC, before being hydroxylated at the C-5 alkyl chain by the cytochrome P450 monooxygenase anuE to form (8S)-annullatin E. The prenyltransferase anuH subsequently installs one isoprenyl group at the benzene ring to form (8S)-annullatin J. Enzymatic or nonenzymatic dihydro-benzofuran ring formation between the prenyl and the phenolic hydroxyl groups in (8S)-annullatin J results in two diastereomers (2S,9S)-annullatin H and compound 12. The intermediate (2S,9S)-annullatin H is then converted to (2S,9S)-annullatin D by the FAD-linked oxidoreductase anuG-catalyzed five-member lactone ring formation. The isomer 12 acts as a substrate for the short-chain dehydrogenase anuF and is oxidized to (2R)-annullatin F, which is subsequently acetylated by an acetyltransferase leading to (2R)-annullatin G formation. The remaining enzymes identified within the cluster, anuD, anuI and anuJ, seem not to be involved in annullatin biosynthesis. This chain is Highly reducing polyketide synthase anuA, found in Penicillium roqueforti (strain FM164).